A 504-amino-acid polypeptide reads, in one-letter code: Maturase K (504 aa).

It belongs to the intron maturase 2 family. MatK subfamily.

It is found in the plastid. The protein localises to the chloroplast. Its function is as follows. Usually encoded in the trnK tRNA gene intron. Probably assists in splicing its own and other chloroplast group II introns. The sequence is that of Maturase K from Kokia drynarioides (Hawaiian tree cotton).